Here is a 288-residue protein sequence, read N- to C-terminus: Bifunctional protein FolD (288 aa).

NADP(+)-binding positions include 166–168 (GAS) and Ile232.

The protein belongs to the tetrahydrofolate dehydrogenase/cyclohydrolase family. As to quaternary structure, homodimer.

It carries out the reaction (6R)-5,10-methylene-5,6,7,8-tetrahydrofolate + NADP(+) = (6R)-5,10-methenyltetrahydrofolate + NADPH. The catalysed reaction is (6R)-5,10-methenyltetrahydrofolate + H2O = (6R)-10-formyltetrahydrofolate + H(+). The protein operates within one-carbon metabolism; tetrahydrofolate interconversion. Functionally, catalyzes the oxidation of 5,10-methylenetetrahydrofolate to 5,10-methenyltetrahydrofolate and then the hydrolysis of 5,10-methenyltetrahydrofolate to 10-formyltetrahydrofolate. In Salmonella enteritidis PT4 (strain P125109), this protein is Bifunctional protein FolD.